A 543-amino-acid polypeptide reads, in one-letter code: Splicing factor U2af large subunit B (543 aa).

Over residues 1–10 (MADDNGGGGD) the composition is skewed to gly residues. The interval 1–171 (MADDNGGGGD…IPTPSQLPGS (171 aa)) is disordered. Composition is skewed to basic and acidic residues over residues 17 to 78 (VRPE…DRDR) and 88 to 114 (EHRDRPDDHDRHRSRDSERRRDRERDG). Positions 115–126 (HRRHRSRSRSRS) are enriched in basic residues. RRM domains lie at 207–290 (RRVY…RPTD), 327–405 (DRIF…RANQ), and 446–532 (QVVT…YPEN).

It belongs to the splicing factor SR family.

Its subcellular location is the nucleus. In terms of biological role, necessary for the splicing of pre-mRNA. In Triticum aestivum (Wheat), this protein is Splicing factor U2af large subunit B (U2AF65B).